The chain runs to 189 residues: 3-hydroxyanthranilate 3,4-dioxygenase (189 aa).

Arg-49 lines the O2 pocket. His-53, Glu-59, and His-97 together coordinate Fe cation. Glu-59 provides a ligand contact to substrate. Substrate is bound by residues Arg-101 and Glu-112. Fe cation is bound by residues Cys-127, Cys-130, Cys-165, and Cys-168.

It belongs to the 3-HAO family. Homodimer. The cofactor is Fe(2+).

It catalyses the reaction 3-hydroxyanthranilate + O2 = (2Z,4Z)-2-amino-3-carboxymuconate 6-semialdehyde. The protein operates within cofactor biosynthesis; NAD(+) biosynthesis; quinolinate from L-kynurenine: step 3/3. Its function is as follows. Catalyzes the oxidative ring opening of 3-hydroxyanthranilate to 2-amino-3-carboxymuconate semialdehyde, which spontaneously cyclizes to quinolinate. This Cupriavidus pinatubonensis (strain JMP 134 / LMG 1197) (Cupriavidus necator (strain JMP 134)) protein is 3-hydroxyanthranilate 3,4-dioxygenase.